We begin with the raw amino-acid sequence, 89 residues long: Putative sodium channel toxin Ts30 (89 aa).

A signal peptide spans Met1–Ala17. The 65-residue stretch at Arg21 to His85 folds into the LCN-type CS-alpha/beta domain. Cystine bridges form between Cys31/Cys84, Cys35/Cys59, Cys44/Cys64, and Cys48/Cys66.

As to expression, expressed by the venom gland.

The protein resides in the secreted. This chain is Putative sodium channel toxin Ts30, found in Tityus serrulatus (Brazilian scorpion).